A 154-amino-acid chain; its full sequence is Crossover junction endodeoxyribonuclease RuvC (154 aa).

Active-site residues include aspartate 7, glutamate 67, and aspartate 139. Residues aspartate 7, glutamate 67, and aspartate 139 each contribute to the Mg(2+) site.

This sequence belongs to the RuvC family. As to quaternary structure, homodimer which binds Holliday junction (HJ) DNA. The HJ becomes 2-fold symmetrical on binding to RuvC with unstacked arms; it has a different conformation from HJ DNA in complex with RuvA. In the full resolvosome a probable DNA-RuvA(4)-RuvB(12)-RuvC(2) complex forms which resolves the HJ. Mg(2+) is required as a cofactor.

Its subcellular location is the cytoplasm. The enzyme catalyses Endonucleolytic cleavage at a junction such as a reciprocal single-stranded crossover between two homologous DNA duplexes (Holliday junction).. Its function is as follows. The RuvA-RuvB-RuvC complex processes Holliday junction (HJ) DNA during genetic recombination and DNA repair. Endonuclease that resolves HJ intermediates. Cleaves cruciform DNA by making single-stranded nicks across the HJ at symmetrical positions within the homologous arms, yielding a 5'-phosphate and a 3'-hydroxyl group; requires a central core of homology in the junction. The consensus cleavage sequence is 5'-(A/T)TT(C/G)-3'. Cleavage occurs on the 3'-side of the TT dinucleotide at the point of strand exchange. HJ branch migration catalyzed by RuvA-RuvB allows RuvC to scan DNA until it finds its consensus sequence, where it cleaves and resolves the cruciform DNA. The chain is Crossover junction endodeoxyribonuclease RuvC from Synechococcus sp. (strain CC9902).